A 267-amino-acid chain; its full sequence is Small ribosomal subunit protein uS3 (267 aa).

The KH type-2 domain occupies Ile39–Arg114. Positions Ala229–Gly248 are enriched in low complexity. Positions Ala229–Asn267 are disordered.

It belongs to the universal ribosomal protein uS3 family. As to quaternary structure, part of the 30S ribosomal subunit. Forms a tight complex with proteins S10 and S14.

In terms of biological role, binds the lower part of the 30S subunit head. Binds mRNA in the 70S ribosome, positioning it for translation. The protein is Small ribosomal subunit protein uS3 of Oenococcus oeni (strain ATCC BAA-331 / PSU-1).